Here is a 467-residue protein sequence, read N- to C-terminus: Glutamate--tRNA ligase (467 aa).

The 'HIGH' region motif lies at 9–19 (PSPTGYLHIGG). The 'KMSKS' region motif lies at 237 to 241 (KLSKR). Residue Lys-240 coordinates ATP.

This sequence belongs to the class-I aminoacyl-tRNA synthetase family. Glutamate--tRNA ligase type 1 subfamily. Monomer.

Its subcellular location is the cytoplasm. It catalyses the reaction tRNA(Glu) + L-glutamate + ATP = L-glutamyl-tRNA(Glu) + AMP + diphosphate. Functionally, catalyzes the attachment of glutamate to tRNA(Glu) in a two-step reaction: glutamate is first activated by ATP to form Glu-AMP and then transferred to the acceptor end of tRNA(Glu). This is Glutamate--tRNA ligase from Xylella fastidiosa (strain M23).